The sequence spans 392 residues: Chorismate synthase (392 aa).

The NADP(+) site is built by arginine 39 and arginine 45. Residues 128–130 (RSS), 248–249 (QA), glycine 300, 315–319 (KPIPT), and arginine 341 each bind FMN.

The protein belongs to the chorismate synthase family. Homotetramer. The cofactor is FMNH2.

The catalysed reaction is 5-O-(1-carboxyvinyl)-3-phosphoshikimate = chorismate + phosphate. The protein operates within metabolic intermediate biosynthesis; chorismate biosynthesis; chorismate from D-erythrose 4-phosphate and phosphoenolpyruvate: step 7/7. Functionally, catalyzes the anti-1,4-elimination of the C-3 phosphate and the C-6 proR hydrogen from 5-enolpyruvylshikimate-3-phosphate (EPSP) to yield chorismate, which is the branch point compound that serves as the starting substrate for the three terminal pathways of aromatic amino acid biosynthesis. This reaction introduces a second double bond into the aromatic ring system. This chain is Chorismate synthase, found in Trichlorobacter lovleyi (strain ATCC BAA-1151 / DSM 17278 / SZ) (Geobacter lovleyi).